Reading from the N-terminus, the 185-residue chain is Ribosome-recycling factor (185 aa).

It belongs to the RRF family.

It is found in the cytoplasm. Functionally, responsible for the release of ribosomes from messenger RNA at the termination of protein biosynthesis. May increase the efficiency of translation by recycling ribosomes from one round of translation to another. The polypeptide is Ribosome-recycling factor (Actinobacillus pleuropneumoniae serotype 5b (strain L20)).